The sequence spans 62 residues: Large ribosomal subunit protein uL30 (62 aa).

Belongs to the universal ribosomal protein uL30 family. As to quaternary structure, part of the 50S ribosomal subunit.

This Kosmotoga olearia (strain ATCC BAA-1733 / DSM 21960 / TBF 19.5.1) protein is Large ribosomal subunit protein uL30.